The primary structure comprises 509 residues: 2,3-bisphosphoglycerate-independent phosphoglycerate mutase (509 aa).

2 residues coordinate Mn(2+): aspartate 12 and serine 62. The Phosphoserine intermediate role is filled by serine 62. Substrate-binding positions include histidine 123, 153–154 (RD), arginine 185, arginine 191, 260–263 (RPDR), and lysine 333. Mn(2+) is bound by residues aspartate 400, histidine 404, aspartate 441, histidine 442, and histidine 460.

It belongs to the BPG-independent phosphoglycerate mutase family. Monomer. Mn(2+) is required as a cofactor.

It catalyses the reaction (2R)-2-phosphoglycerate = (2R)-3-phosphoglycerate. It functions in the pathway carbohydrate degradation; glycolysis; pyruvate from D-glyceraldehyde 3-phosphate: step 3/5. In terms of biological role, catalyzes the interconversion of 2-phosphoglycerate and 3-phosphoglycerate. This Clostridium botulinum (strain ATCC 19397 / Type A) protein is 2,3-bisphosphoglycerate-independent phosphoglycerate mutase.